Here is a 315-residue protein sequence, read N- to C-terminus: Protein OPG185 (315 aa).

A signal peptide spans 1–16 (MTRLPILLLLISLVYA). The Ig-like V-type domain occupies 17–121 (TPFPQTSKKI…NDTDKVDYEE (105 aa)). Residues 17–279 (TPFPQTSKKI…SNYKTKDFVE (263 aa)) lie on the Virion surface side of the membrane. C34 and C103 are disulfide-bonded. N-linked (GlcNAc...) asparagine; by host glycans are attached at residues N37, N69, N112, and N161. Polar residues predominate over residues 193–202 (NTVSASSGES). A disordered region spans residues 193-213 (NTVSASSGESTTDETPEPITD). Residue N254 is glycosylated (N-linked (GlcNAc...) asparagine; by host). A helical transmembrane segment spans residues 280 to 303 (IFGITALIILSAVAIFCITYYIYN). Topologically, residues 304–315 (KRSRKYKTENKV) are intravirion.

The protein belongs to the orthopoxvirus OPG185 family. As to quaternary structure, heterodimerizes with OPG040. The heterodimer OPG185-OPG040 interacts with components of the entry fusion complex OPG143 and OPG094. Heterodimer with C3/VPC protein; disulfide-linked. Post-translationally, glycosylated; contains phosphate and sulfate-substituted glycans. O-glycosylation is required for hemagglutination and hemadsorption activities of infected cell membranes.

It is found in the virion membrane. Its subcellular location is the host membrane. Its function is as follows. Prevents cell to cell fusion by interacting with and directing the viral OPG040 protein on the host plasma membrane. The OPG185-OPG040 complex associates with components of the entry fusion complex (EFC) presumably to avoid superinfection and syncytium formation. Via its interaction with C3/VCP protein, protects the infected cell and probably also the extracellular enveloped virus from complement attack. This is Protein OPG185 (OPG185) from Homo sapiens (Human).